Consider the following 187-residue polypeptide: Orotate phosphoribosyltransferase (187 aa).

Residues Arg-98, Lys-99, Lys-102, His-104, and 128 to 136 (EDVTTTGGS) contribute to the 5-phospho-alpha-D-ribose 1-diphosphate site. Orotate contacts are provided by Thr-132 and Arg-160.

It belongs to the purine/pyrimidine phosphoribosyltransferase family. PyrE subfamily. As to quaternary structure, homodimer. The cofactor is Mg(2+).

The enzyme catalyses orotidine 5'-phosphate + diphosphate = orotate + 5-phospho-alpha-D-ribose 1-diphosphate. It participates in pyrimidine metabolism; UMP biosynthesis via de novo pathway; UMP from orotate: step 1/2. Its function is as follows. Catalyzes the transfer of a ribosyl phosphate group from 5-phosphoribose 1-diphosphate to orotate, leading to the formation of orotidine monophosphate (OMP). In Rhodopseudomonas palustris (strain BisB18), this protein is Orotate phosphoribosyltransferase.